A 518-amino-acid chain; its full sequence is Bifunctional purine biosynthesis protein PurH (518 aa).

Positions 1 to 146 (MSPIALLSVS…KNHQDVLVVT (146 aa)) constitute an MGS-like domain.

Belongs to the PurH family.

It carries out the reaction (6R)-10-formyltetrahydrofolate + 5-amino-1-(5-phospho-beta-D-ribosyl)imidazole-4-carboxamide = 5-formamido-1-(5-phospho-D-ribosyl)imidazole-4-carboxamide + (6S)-5,6,7,8-tetrahydrofolate. The catalysed reaction is IMP + H2O = 5-formamido-1-(5-phospho-D-ribosyl)imidazole-4-carboxamide. The protein operates within purine metabolism; IMP biosynthesis via de novo pathway; 5-formamido-1-(5-phospho-D-ribosyl)imidazole-4-carboxamide from 5-amino-1-(5-phospho-D-ribosyl)imidazole-4-carboxamide (10-formyl THF route): step 1/1. It functions in the pathway purine metabolism; IMP biosynthesis via de novo pathway; IMP from 5-formamido-1-(5-phospho-D-ribosyl)imidazole-4-carboxamide: step 1/1. The chain is Bifunctional purine biosynthesis protein PurH from Prochlorococcus marinus (strain NATL1A).